A 564-amino-acid polypeptide reads, in one-letter code: NAC domain-containing protein 16 (564 aa).

Positions 16–166 (SAPGFRFHPT…YYALYKLYKK (151 aa)) constitute an NAC domain. Residues 115-172 (VGLKKTLVFYRGRAPNGERTDWVMHEYTMDEEELGRCKNAKEYYALYKLYKKSGAGPK) mediate DNA binding. A helical transmembrane segment spans residues 535–555 (FLLLSIMGALCAIFWVFKATV).

As to expression, expressed in roots, rosette leaves, shoot apex, stems and flowers.

It is found in the membrane. The protein localises to the nucleus. In terms of biological role, transcriptional activator activated by proteolytic cleavage through regulated intramembrane proteolysis (RIP). Transcriptional activator that promotes leaf senescence by up-regulating senescence-associated genes in response to developmental and stress-induced senescence signals. Functions in salt and oxidative stress-responsive signaling pathways. Binds to the promoter of NAC029/NAP and NAC059/ORS1 genes. The chain is NAC domain-containing protein 16 from Arabidopsis thaliana (Mouse-ear cress).